The following is a 431-amino-acid chain: Putative helicase 055L (431 aa).

One can recognise a Helicase ATP-binding domain in the interval 73-222 (WGHVTSKGYC…ALGAFFGRED (150 aa)). Position 86–93 (86–93 (CPPGFGKT)) interacts with ATP. Positions 175 to 178 (DEAH) match the DEAH box motif. The tract at residues 403-431 (KCDASRPSQSTPTPTGSSQPAPRTRRPQR) is disordered. Residues 407-424 (SRPSQSTPTPTGSSQPAP) are compositionally biased toward low complexity.

The chain is Putative helicase 055L from Frog virus 3 (isolate Goorha) (FV-3).